The following is a 200-amino-acid chain: Glycerol-3-phosphate acyltransferase (200 aa).

The next 5 helical transmembrane spans lie at 6 to 26 (LTLG…AVLV), 56 to 76 (SAAM…YIAF), 82 to 102 (QVAL…PIFF), 118 to 138 (APIG…MVLI), and 141 to 161 (YSSL…WFLD).

Belongs to the PlsY family. As to quaternary structure, probably interacts with PlsX.

It is found in the cell inner membrane. The enzyme catalyses an acyl phosphate + sn-glycerol 3-phosphate = a 1-acyl-sn-glycero-3-phosphate + phosphate. It functions in the pathway lipid metabolism; phospholipid metabolism. Functionally, catalyzes the transfer of an acyl group from acyl-phosphate (acyl-PO(4)) to glycerol-3-phosphate (G3P) to form lysophosphatidic acid (LPA). This enzyme utilizes acyl-phosphate as fatty acyl donor, but not acyl-CoA or acyl-ACP. The chain is Glycerol-3-phosphate acyltransferase from Shewanella sediminis (strain HAW-EB3).